The following is a 49-amino-acid chain: uncharacterized protein (49 aa).

Residues 23 to 43 (LYVISFVLFIVLFFGMFFKLI) traverse the membrane as a helical segment.

It localises to the host membrane. This is an uncharacterized protein from Spiroplasma melliferum (SpV1).